A 432-amino-acid polypeptide reads, in one-letter code: Enolase (432 aa).

(2R)-2-phosphoglycerate is bound at residue Gln167. Glu209 (proton donor) is an active-site residue. Positions 246, 290, and 317 each coordinate Mg(2+). (2R)-2-phosphoglycerate is bound by residues Lys342, Arg371, Ser372, and Lys393. Lys342 acts as the Proton acceptor in catalysis.

It belongs to the enolase family. Component of the RNA degradosome, a multiprotein complex involved in RNA processing and mRNA degradation. Requires Mg(2+) as cofactor.

The protein resides in the cytoplasm. It is found in the secreted. The protein localises to the cell surface. The enzyme catalyses (2R)-2-phosphoglycerate = phosphoenolpyruvate + H2O. It functions in the pathway carbohydrate degradation; glycolysis; pyruvate from D-glyceraldehyde 3-phosphate: step 4/5. Functionally, catalyzes the reversible conversion of 2-phosphoglycerate (2-PG) into phosphoenolpyruvate (PEP). It is essential for the degradation of carbohydrates via glycolysis. The polypeptide is Enolase (Salmonella dublin (strain CT_02021853)).